A 158-amino-acid chain; its full sequence is NAD(P)H-quinone oxidoreductase subunit J, chloroplastic (158 aa).

Belongs to the complex I 30 kDa subunit family. In terms of assembly, NDH is composed of at least 16 different subunits, 5 of which are encoded in the nucleus.

It localises to the plastid. The protein localises to the chloroplast thylakoid membrane. It carries out the reaction a plastoquinone + NADH + (n+1) H(+)(in) = a plastoquinol + NAD(+) + n H(+)(out). The enzyme catalyses a plastoquinone + NADPH + (n+1) H(+)(in) = a plastoquinol + NADP(+) + n H(+)(out). In terms of biological role, NDH shuttles electrons from NAD(P)H:plastoquinone, via FMN and iron-sulfur (Fe-S) centers, to quinones in the photosynthetic chain and possibly in a chloroplast respiratory chain. The immediate electron acceptor for the enzyme in this species is believed to be plastoquinone. Couples the redox reaction to proton translocation, and thus conserves the redox energy in a proton gradient. The chain is NAD(P)H-quinone oxidoreductase subunit J, chloroplastic from Citrus sinensis (Sweet orange).